The following is a 387-amino-acid chain: Protein spaetzle 5 (387 aa).

Positions M1–A29 are cleaved as a signal peptide. A propeptide spanning residues H30 to R284 is cleaved from the precursor. The interval Q133 to S197 is disordered. N195 and N204 each carry an N-linked (GlcNAc...) asparagine glycan. 2 disordered regions span residues K219–R256 and G269–T291. The span at Q237–P247 shows a compositional bias: acidic residues. Over residues L276–S286 the composition is skewed to basic residues. In terms of domain architecture, Spaetzle spans T291–I384. Intrachain disulfides connect C293-C350, C331-C380, and C340-C382.

Homodimer; disulfide-linked. In terms of tissue distribution, detected in the fan-shaped body which is a component of the locomotion center in the central nervous system (CNS) (at protein level).

Neurotrophin which may function as a ligand for the Toll-related receptors Toll-6 and Toll-7. Binds to Toll-7 and Toll-6, and probably acts as their ligands in the promotion of motor axon targeting and neuronal survival in the central nervous system (CNS). Involved in synaptic targeting of ISNb/d motorneurons and also some SNa motorneurons. May be involved in the normal development of specific neurons at the neuromuscular junction. In Drosophila melanogaster (Fruit fly), this protein is Protein spaetzle 5.